A 601-amino-acid polypeptide reads, in one-letter code: Membrane protein insertase YidC (601 aa).

A helical membrane pass occupies residues 10 to 30; sequence ISISLVILVLFQVIASYVLPP. The interval 34–63 is disordered; the sequence is APPHPATQTAQTQPVSGQPAPGVPAPSAVP. Residues 39–53 show a composition bias toward low complexity; the sequence is ATQTAQTQPVSGQPA. The segment covering 54-63 has biased composition (pro residues); the sequence is PGVPAPSAVP. The next 4 helical transmembrane spans lie at 382–404, 455–475, 510–530, and 549–569; these read FGNM…FPLV, LPML…FISI, ALSP…TMWG, and FMPV…VLYY.

It belongs to the OXA1/ALB3/YidC family. Type 1 subfamily. In terms of assembly, interacts with the Sec translocase complex via SecD. Specifically interacts with transmembrane segments of nascent integral membrane proteins during membrane integration.

It is found in the cell inner membrane. Functionally, required for the insertion and/or proper folding and/or complex formation of integral membrane proteins into the membrane. Involved in integration of membrane proteins that insert both dependently and independently of the Sec translocase complex, as well as at least some lipoproteins. Aids folding of multispanning membrane proteins. The sequence is that of Membrane protein insertase YidC from Acidiphilium cryptum (strain JF-5).